We begin with the raw amino-acid sequence, 266 residues long: Energy-coupling factor transporter transmembrane protein EcfT (266 aa).

The next 7 membrane-spanning stretches (helical) occupy residues 26 to 46 (VIAT…RSVT), 47 to 67 (LAGL…HYIL), 69 to 89 (GIKP…LSTP), 116 to 136 (LIWL…IALT), 151 to 171 (LPVH…PTLI), 192 to 212 (SLVA…LSAF), and 246 to 266 (YAVT…KKAL).

Belongs to the energy-coupling factor EcfT family. As to quaternary structure, forms a stable energy-coupling factor (ECF) transporter complex composed of 2 membrane-embedded substrate-binding proteins (S component), 2 ATP-binding proteins (A component) and 2 transmembrane proteins (T component). May be able to interact with more than 1 S component at a time.

Its subcellular location is the cell membrane. Transmembrane (T) component of an energy-coupling factor (ECF) ABC-transporter complex. Unlike classic ABC transporters this ECF transporter provides the energy necessary to transport a number of different substrates. The polypeptide is Energy-coupling factor transporter transmembrane protein EcfT (Heliobacterium modesticaldum (strain ATCC 51547 / Ice1)).